The following is a 104-amino-acid chain: Large ribosomal subunit protein uL24 (104 aa).

It belongs to the universal ribosomal protein uL24 family. Part of the 50S ribosomal subunit.

Its function is as follows. One of two assembly initiator proteins, it binds directly to the 5'-end of the 23S rRNA, where it nucleates assembly of the 50S subunit. In terms of biological role, one of the proteins that surrounds the polypeptide exit tunnel on the outside of the subunit. The protein is Large ribosomal subunit protein uL24 of Yersinia pseudotuberculosis serotype O:1b (strain IP 31758).